The chain runs to 455 residues: Phosphoglucosamine mutase (455 aa).

Ser107 acts as the Phosphoserine intermediate in catalysis. Mg(2+)-binding residues include Ser107, Asp247, Asp249, and Asp251. The residue at position 107 (Ser107) is a Phosphoserine.

The protein belongs to the phosphohexose mutase family. It depends on Mg(2+) as a cofactor. Post-translationally, activated by phosphorylation.

The enzyme catalyses alpha-D-glucosamine 1-phosphate = D-glucosamine 6-phosphate. In terms of biological role, catalyzes the conversion of glucosamine-6-phosphate to glucosamine-1-phosphate. The polypeptide is Phosphoglucosamine mutase (Leuconostoc citreum (strain KM20)).